The primary structure comprises 266 residues: Translation initiation factor 2 subunit alpha (266 aa).

The 72-residue stretch at 12-83 (GEILIATVKQ…RKGTVDVSLK (72 aa)) folds into the S1 motif domain.

Belongs to the eIF-2-alpha family. As to quaternary structure, heterotrimer composed of an alpha, a beta and a gamma chain.

Functionally, eIF-2 functions in the early steps of protein synthesis by forming a ternary complex with GTP and initiator tRNA. This chain is Translation initiation factor 2 subunit alpha, found in Saccharolobus solfataricus (strain ATCC 35092 / DSM 1617 / JCM 11322 / P2) (Sulfolobus solfataricus).